The chain runs to 422 residues: MIYIDNIVAQEVMDSRGNPTVKATVTLSDGNSASAIVPSGASTGKREALELRDGDSRYLGKGVLQACENVNTKLSEELIGLSPFDQSEIDAIIQELDGTENFANIGANAALGVSMAVARSAAKSLNIPLYRYLGGANALTLPVPMLNIINGGSHADNTVDFQEYMIMPLGFENFSESLRASAEVYHHLKKILKDSKHITSIGDEGGFAPNLKTNEEPIQIIIQAIEKAGYRPGEEIALALDVASSEFVNEQGLYHLEGEGRTLSSEELVGYYESLIAKYPIVSIEDGLSEDDWKGWKYLTERLGGKVQLVGDDLFVTNAKILQEGISQGIANAILIKPNQIGTVSQTMQTVRLAQRNHYRCVMSHRSGESEDSFIADFAVALNTGEIKTGSTARSERIAKYNRLLAIESELCRSEYLGRSLF.

Glutamine 162 lines the (2R)-2-phosphoglycerate pocket. Glutamate 204 acts as the Proton donor in catalysis. Mg(2+) contacts are provided by aspartate 241, glutamate 285, and aspartate 312. Lysine 337, arginine 366, serine 367, and lysine 388 together coordinate (2R)-2-phosphoglycerate. Lysine 337 serves as the catalytic Proton acceptor.

This sequence belongs to the enolase family. Mg(2+) serves as cofactor.

The protein localises to the cytoplasm. It localises to the secreted. Its subcellular location is the cell surface. It catalyses the reaction (2R)-2-phosphoglycerate = phosphoenolpyruvate + H2O. It participates in carbohydrate degradation; glycolysis; pyruvate from D-glyceraldehyde 3-phosphate: step 4/5. Catalyzes the reversible conversion of 2-phosphoglycerate (2-PG) into phosphoenolpyruvate (PEP). It is essential for the degradation of carbohydrates via glycolysis. The chain is Enolase from Wolinella succinogenes (strain ATCC 29543 / DSM 1740 / CCUG 13145 / JCM 31913 / LMG 7466 / NCTC 11488 / FDC 602W) (Vibrio succinogenes).